A 229-amino-acid chain; its full sequence is Uracil-DNA glycosylase (229 aa).

The Proton acceptor role is filled by Asp-64.

The protein belongs to the uracil-DNA glycosylase (UDG) superfamily. UNG family.

Its subcellular location is the cytoplasm. The catalysed reaction is Hydrolyzes single-stranded DNA or mismatched double-stranded DNA and polynucleotides, releasing free uracil.. Its function is as follows. Excises uracil residues from the DNA which can arise as a result of misincorporation of dUMP residues by DNA polymerase or due to deamination of cytosine. The chain is Uracil-DNA glycosylase from Salmonella agona (strain SL483).